A 288-amino-acid chain; its full sequence is ATP synthase gamma chain (288 aa).

The protein belongs to the ATPase gamma chain family. F-type ATPases have 2 components, CF(1) - the catalytic core - and CF(0) - the membrane proton channel. CF(1) has five subunits: alpha(3), beta(3), gamma(1), delta(1), epsilon(1). CF(0) has three main subunits: a, b and c.

It localises to the cell inner membrane. Produces ATP from ADP in the presence of a proton gradient across the membrane. The gamma chain is believed to be important in regulating ATPase activity and the flow of protons through the CF(0) complex. The protein is ATP synthase gamma chain of Glaesserella parasuis serovar 5 (strain SH0165) (Haemophilus parasuis).